Here is a 155-residue protein sequence, read N- to C-terminus: RNA pyrophosphohydrolase (155 aa).

Residues 5 to 149 (EYRSGVGIML…KKPLYEKILS (145 aa)) enclose the Nudix hydrolase domain. The Nudix box motif lies at 39–60 (GGLEAKETPEVGVLRELEEETG).

This sequence belongs to the Nudix hydrolase family. RppH subfamily. It depends on a divalent metal cation as a cofactor.

In terms of biological role, accelerates the degradation of transcripts by removing pyrophosphate from the 5'-end of triphosphorylated RNA, leading to a more labile monophosphorylated state that can stimulate subsequent ribonuclease cleavage. This Zymomonas mobilis subsp. mobilis (strain ATCC 31821 / ZM4 / CP4) protein is RNA pyrophosphohydrolase.